The primary structure comprises 323 residues: Phosphoribosylaminoimidazole-succinocarboxamide synthase (323 aa).

Belongs to the SAICAR synthetase family.

The enzyme catalyses 5-amino-1-(5-phospho-D-ribosyl)imidazole-4-carboxylate + L-aspartate + ATP = (2S)-2-[5-amino-1-(5-phospho-beta-D-ribosyl)imidazole-4-carboxamido]succinate + ADP + phosphate + 2 H(+). The protein operates within purine metabolism; IMP biosynthesis via de novo pathway; 5-amino-1-(5-phospho-D-ribosyl)imidazole-4-carboxamide from 5-amino-1-(5-phospho-D-ribosyl)imidazole-4-carboxylate: step 1/2. This Azobacteroides pseudotrichonymphae genomovar. CFP2 protein is Phosphoribosylaminoimidazole-succinocarboxamide synthase.